The sequence spans 859 residues: Probable helicase A859L (859 aa).

The region spanning 178–349 (YQELRRSGRA…KNRELFGGVA (172 aa)) is the Helicase ATP-binding domain. 191 to 198 (MACRCGKT) is a binding site for ATP. The DEAH box signature appears at 298 to 301 (DECH). A Helicase C-terminal domain is found at 401 to 553 (HLKTNITAPK…RFYEHLLNPS (153 aa)).

It belongs to the asfivirus helicase A859L family.

The polypeptide is Probable helicase A859L (African swine fever virus (isolate Tick/South Africa/Pretoriuskop Pr4/1996) (ASFV)).